Consider the following 134-residue polypeptide: MIEVGEYKIKEGLYYTKEHEWVQVLEDGTVLVGITDYAQKELGDLAYVELPEVGKVVEKGDVLCEVESVKAVSEVYAPVSGEVIEVNEELADSPEKINEDPYEAWIAKIKPKNLEEELKELMDAKAYAEYLKTL.

One can recognise a Lipoyl-binding domain in the interval 29 to 110 (TVLVGITDYA…PYEAWIAKIK (82 aa)). An N6-lipoyllysine modification is found at lysine 70.

This sequence belongs to the GcvH family. In terms of assembly, the glycine cleavage system is composed of four proteins: P, T, L and H. (R)-lipoate serves as cofactor.

Functionally, the glycine cleavage system catalyzes the degradation of glycine. The H protein shuttles the methylamine group of glycine from the P protein to the T protein. This Pyrococcus furiosus (strain ATCC 43587 / DSM 3638 / JCM 8422 / Vc1) protein is Probable glycine cleavage system H protein.